A 356-amino-acid polypeptide reads, in one-letter code: Heat-inducible transcription repressor HrcA (356 aa).

The protein belongs to the HrcA family.

Negative regulator of class I heat shock genes (grpE-dnaK-dnaJ and groELS operons). Prevents heat-shock induction of these operons. This chain is Heat-inducible transcription repressor HrcA, found in Brucella abortus (strain S19).